Reading from the N-terminus, the 149-residue chain is MSELLKLHHLRPAPGSNKAKIRKGRGEASKGKTAGRGTKGTKARSTVPAGFEGGQMPLIRRIPKLKGFSNAKFKTVYQVVNLDKLSKLYPEGGEVTIEDLVAKGAVRKNQPVKVLGTGEISVPVRVSANAFSSSAKEKILAAGGSVTEI.

A disordered region spans residues 1–52; that stretch reads MSELLKLHHLRPAPGSNKAKIRKGRGEASKGKTAGRGTKGTKARSTVPAGFE.

It belongs to the universal ribosomal protein uL15 family. Part of the 50S ribosomal subunit.

In terms of biological role, binds to the 23S rRNA. The protein is Large ribosomal subunit protein uL15 of Thermobifida fusca (strain YX).